A 101-amino-acid chain; its full sequence is Protein S100-A7-like 2 (101 aa).

2 EF-hand domains span residues 13-48 (IVAM…SGCE) and 50-85 (SDMD…ITID). Ca(2+)-binding residues include aspartate 63, asparagine 65, aspartate 67, lysine 69, and glutamate 74. Zn(2+) is bound by residues histidine 87 and histidine 91.

Belongs to the S-100 family.

The polypeptide is Protein S100-A7-like 2 (S100A7L2) (Homo sapiens (Human)).